The sequence spans 338 residues: Ketol-acid reductoisomerase (NADP(+)) (338 aa).

The KARI N-terminal Rossmann domain maps to 1–181 (MRVFYDKDCD…GGGRTGIIET (181 aa)). Residues 24–27 (YGSQ), Arg47, Ser50, Thr52, and 82–85 (DEFQ) contribute to the NADP(+) site. The active site involves His107. Residue Gly133 participates in NADP(+) binding. Residues 182 to 327 (TFKDETETDL…EKLRAMMPWI (146 aa)) enclose the KARI C-terminal knotted domain. Asp190, Glu194, Glu226, and Glu230 together coordinate Mg(2+). Position 251 (Ser251) interacts with substrate.

This sequence belongs to the ketol-acid reductoisomerase family. Mg(2+) is required as a cofactor.

It catalyses the reaction (2R)-2,3-dihydroxy-3-methylbutanoate + NADP(+) = (2S)-2-acetolactate + NADPH + H(+). It carries out the reaction (2R,3R)-2,3-dihydroxy-3-methylpentanoate + NADP(+) = (S)-2-ethyl-2-hydroxy-3-oxobutanoate + NADPH + H(+). Its pathway is amino-acid biosynthesis; L-isoleucine biosynthesis; L-isoleucine from 2-oxobutanoate: step 2/4. It participates in amino-acid biosynthesis; L-valine biosynthesis; L-valine from pyruvate: step 2/4. Involved in the biosynthesis of branched-chain amino acids (BCAA). Catalyzes an alkyl-migration followed by a ketol-acid reduction of (S)-2-acetolactate (S2AL) to yield (R)-2,3-dihydroxy-isovalerate. In the isomerase reaction, S2AL is rearranged via a Mg-dependent methyl migration to produce 3-hydroxy-3-methyl-2-ketobutyrate (HMKB). In the reductase reaction, this 2-ketoacid undergoes a metal-dependent reduction by NADPH to yield (R)-2,3-dihydroxy-isovalerate. The sequence is that of Ketol-acid reductoisomerase (NADP(+)) from Pseudomonas paraeruginosa (strain DSM 24068 / PA7) (Pseudomonas aeruginosa (strain PA7)).